Here is a 431-residue protein sequence, read N- to C-terminus: V-type ATP synthase beta chain (431 aa).

Belongs to the ATPase alpha/beta chains family.

Functionally, produces ATP from ADP in the presence of a proton gradient across the membrane. The V-type beta chain is a regulatory subunit. The chain is V-type ATP synthase beta chain from Treponema denticola (strain ATCC 35405 / DSM 14222 / CIP 103919 / JCM 8153 / KCTC 15104).